The primary structure comprises 219 residues: Chloramphenicol acetyltransferase (219 aa).

The Proton acceptor role is filled by His-190.

It belongs to the chloramphenicol acetyltransferase family. In terms of assembly, homotrimer.

The catalysed reaction is chloramphenicol + acetyl-CoA = chloramphenicol 3-acetate + CoA. In terms of biological role, this enzyme is an effector of chloramphenicol resistance in bacteria. In Clostridium butyricum, this protein is Chloramphenicol acetyltransferase (catB).